We begin with the raw amino-acid sequence, 409 residues long: LL-diaminopimelate aminotransferase (409 aa).

Tyr-15 and Gly-42 together coordinate substrate. Residues Tyr-72, 108 to 109, Tyr-132, Asn-186, Tyr-217, and 245 to 247 each bind pyridoxal 5'-phosphate; these read AK and SFS. Substrate contacts are provided by Lys-109, Tyr-132, and Asn-186. Lys-248 is subject to N6-(pyridoxal phosphate)lysine. Positions 256 and 291 each coordinate pyridoxal 5'-phosphate. Residues Asn-291 and Arg-385 each contribute to the substrate site.

This sequence belongs to the class-I pyridoxal-phosphate-dependent aminotransferase family. LL-diaminopimelate aminotransferase subfamily. Homodimer. Requires pyridoxal 5'-phosphate as cofactor.

The catalysed reaction is (2S,6S)-2,6-diaminopimelate + 2-oxoglutarate = (S)-2,3,4,5-tetrahydrodipicolinate + L-glutamate + H2O + H(+). The protein operates within amino-acid biosynthesis; L-lysine biosynthesis via DAP pathway; LL-2,6-diaminopimelate from (S)-tetrahydrodipicolinate (aminotransferase route): step 1/1. In terms of biological role, involved in the synthesis of meso-diaminopimelate (m-DAP or DL-DAP), required for both lysine and peptidoglycan biosynthesis. Catalyzes the direct conversion of tetrahydrodipicolinate to LL-diaminopimelate. This chain is LL-diaminopimelate aminotransferase, found in Desulfosudis oleivorans (strain DSM 6200 / JCM 39069 / Hxd3) (Desulfococcus oleovorans).